A 125-amino-acid polypeptide reads, in one-letter code: Ribonuclease P protein component (125 aa).

Belongs to the RnpA family. Consists of a catalytic RNA component (M1 or rnpB) and a protein subunit.

It carries out the reaction Endonucleolytic cleavage of RNA, removing 5'-extranucleotides from tRNA precursor.. RNaseP catalyzes the removal of the 5'-leader sequence from pre-tRNA to produce the mature 5'-terminus. It can also cleave other RNA substrates such as 4.5S RNA. The protein component plays an auxiliary but essential role in vivo by binding to the 5'-leader sequence and broadening the substrate specificity of the ribozyme. In Rhodococcus opacus (strain B4), this protein is Ribonuclease P protein component.